The sequence spans 252 residues: Receptor expression-enhancing protein 2 (252 aa).

2 consecutive transmembrane segments (helical) span residues 1-21 (MVSWIISRLVVLIFGTLYPAY) and 35-55 (YVKWMMYWIVFAFFTTAETLT). Residue serine 150 is modified to Phosphoserine. Residues 165–252 (LQRPDGRLRP…KKTSGGGDSA (88 aa)) form a disordered region. The segment covering 203–217 (SRTEASEDDMGDKAP) has biased composition (basic and acidic residues).

This sequence belongs to the DP1 family. As to quaternary structure, interacts with odorant receptor proteins. In terms of tissue distribution, detected in brain, heart and skeletal muscle, and at low levels in placenta, kidney and pancreas. Expressed in circumvallate papillae.

The protein resides in the membrane. Required for endoplasmic reticulum (ER) network formation, shaping and remodeling. May enhance the cell surface expression of odorant receptors. The chain is Receptor expression-enhancing protein 2 (REEP2) from Homo sapiens (Human).